The following is a 275-amino-acid chain: 2,3,4,5-tetrahydropyridine-2,6-dicarboxylate N-succinyltransferase (275 aa).

The substrate site is built by arginine 106 and aspartate 143.

This sequence belongs to the transferase hexapeptide repeat family. In terms of assembly, homotrimer.

Its subcellular location is the cytoplasm. It catalyses the reaction (S)-2,3,4,5-tetrahydrodipicolinate + succinyl-CoA + H2O = (S)-2-succinylamino-6-oxoheptanedioate + CoA. It functions in the pathway amino-acid biosynthesis; L-lysine biosynthesis via DAP pathway; LL-2,6-diaminopimelate from (S)-tetrahydrodipicolinate (succinylase route): step 1/3. This Cupriavidus necator (strain ATCC 17699 / DSM 428 / KCTC 22496 / NCIMB 10442 / H16 / Stanier 337) (Ralstonia eutropha) protein is 2,3,4,5-tetrahydropyridine-2,6-dicarboxylate N-succinyltransferase.